The primary structure comprises 127 residues: Membrane-bound lysozyme inhibitor of C-type lysozyme (127 aa).

The signal sequence occupies residues 1–18; the sequence is MKKALWLLLAAVPVVLVA. Cysteine 19 carries the N-palmitoyl cysteine lipid modification. Cysteine 19 carries the S-diacylglycerol cysteine lipid modification. A disulfide bridge connects residues cysteine 51 and cysteine 124.

This sequence belongs to the MliC family. Type 2 subfamily. In terms of assembly, homodimer.

The protein localises to the cell outer membrane. Functionally, specifically inhibits C-type lysozymes. The chain is Membrane-bound lysozyme inhibitor of C-type lysozyme from Pseudomonas aeruginosa (strain ATCC 15692 / DSM 22644 / CIP 104116 / JCM 14847 / LMG 12228 / 1C / PRS 101 / PAO1).